We begin with the raw amino-acid sequence, 206 residues long: LexA repressor (206 aa).

A DNA-binding region (H-T-H motif) is located at residues 28-48 (RAEIATRLGFKSANAAEEHLK). Residues Ser123 and Lys160 each act as for autocatalytic cleavage activity in the active site.

This sequence belongs to the peptidase S24 family. As to quaternary structure, homodimer.

The enzyme catalyses Hydrolysis of Ala-|-Gly bond in repressor LexA.. Its function is as follows. Represses a number of genes involved in the response to DNA damage (SOS response), including recA and lexA. In the presence of single-stranded DNA, RecA interacts with LexA causing an autocatalytic cleavage which disrupts the DNA-binding part of LexA, leading to derepression of the SOS regulon and eventually DNA repair. This is LexA repressor from Shewanella sp. (strain MR-7).